The chain runs to 234 residues: UDP-2,3-diacylglucosamine hydrolase (234 aa).

D9, H11, D42, N80, and H115 together coordinate Mn(2+). Residue 80–81 (NR) coordinates substrate. Positions 123, 161, 165, 168, and 196 each coordinate substrate. Residues H196 and H198 each contribute to the Mn(2+) site.

This sequence belongs to the LpxH family. Mn(2+) is required as a cofactor.

It localises to the cell inner membrane. The catalysed reaction is UDP-2-N,3-O-bis[(3R)-3-hydroxytetradecanoyl]-alpha-D-glucosamine + H2O = 2-N,3-O-bis[(3R)-3-hydroxytetradecanoyl]-alpha-D-glucosaminyl 1-phosphate + UMP + 2 H(+). It functions in the pathway glycolipid biosynthesis; lipid IV(A) biosynthesis; lipid IV(A) from (3R)-3-hydroxytetradecanoyl-[acyl-carrier-protein] and UDP-N-acetyl-alpha-D-glucosamine: step 4/6. In terms of biological role, hydrolyzes the pyrophosphate bond of UDP-2,3-diacylglucosamine to yield 2,3-diacylglucosamine 1-phosphate (lipid X) and UMP by catalyzing the attack of water at the alpha-P atom. Involved in the biosynthesis of lipid A, a phosphorylated glycolipid that anchors the lipopolysaccharide to the outer membrane of the cell. The polypeptide is UDP-2,3-diacylglucosamine hydrolase (Haemophilus ducreyi (strain 35000HP / ATCC 700724)).